A 137-amino-acid polypeptide reads, in one-letter code: uncharacterized protein (137 aa).

The next 2 helical transmembrane spans lie at 36 to 52 and 113 to 129; these read LAPP…PFVL and FYGY…IFCF.

It localises to the membrane. This is an uncharacterized protein from Saccharomyces cerevisiae (strain ATCC 204508 / S288c) (Baker's yeast).